Consider the following 257-residue polypeptide: Small ribosomal subunit protein uS15m (257 aa).

The N-terminal 57 residues, Met-1 to Pro-57, are a transit peptide targeting the mitochondrion. A disordered region spans residues Lys-228–Asn-257. Positions Ala-234–Pro-243 are enriched in basic and acidic residues.

It belongs to the universal ribosomal protein uS15 family. Component of the mitochondrial ribosome small subunit (28S) which comprises a 12S rRNA and about 30 distinct proteins. Interacts with METTL17.

The protein resides in the mitochondrion matrix. The polypeptide is Small ribosomal subunit protein uS15m (Mrps15) (Rattus norvegicus (Rat)).